A 955-amino-acid chain; its full sequence is 2-oxoglutarate dehydrogenase E1 component (955 aa).

It belongs to the alpha-ketoglutarate dehydrogenase family. As to quaternary structure, homodimer. Part of the 2-oxoglutarate dehydrogenase (OGDH) complex composed of E1 (2-oxoglutarate dehydrogenase), E2 (dihydrolipoamide succinyltransferase) and E3 (dihydrolipoamide dehydrogenase); the complex contains multiple copies of the three enzymatic components (E1, E2 and E3). Thiamine diphosphate serves as cofactor.

It catalyses the reaction N(6)-[(R)-lipoyl]-L-lysyl-[protein] + 2-oxoglutarate + H(+) = N(6)-[(R)-S(8)-succinyldihydrolipoyl]-L-lysyl-[protein] + CO2. E1 component of the 2-oxoglutarate dehydrogenase (OGDH) complex which catalyzes the decarboxylation of 2-oxoglutarate, the first step in the conversion of 2-oxoglutarate to succinyl-CoA and CO(2). This chain is 2-oxoglutarate dehydrogenase E1 component, found in Bacillus cereus (strain AH820).